Here is a 95-residue protein sequence, read N- to C-terminus: Small ubiquitin-related modifier 2 (95 aa).

Met1 participates in a covalent cross-link: Peptide (Met-Gly) (interchain with G-Cter in ubiquitin). Glycyl lysine isopeptide (Lys-Gly) (interchain with G-Cter in SUMO2) cross-links involve residues Lys5 and Lys7. Lys11 carries the post-translational modification N6-acetyllysine; alternate. A Glycyl lysine isopeptide (Lys-Gly) (interchain with G-Cter in SUMO); alternate cross-link involves residue Lys11. Lys11 is covalently cross-linked (Glycyl lysine isopeptide (Lys-Gly) (interchain with G-Cter in SUMO1); alternate). Residue Lys11 forms a Glycyl lysine isopeptide (Lys-Gly) (interchain with G-Cter in SUMO2); alternate linkage. Lys11 participates in a covalent cross-link: Glycyl lysine isopeptide (Lys-Gly) (interchain with G-Cter in ubiquitin); alternate. The region spanning 16–95 (DHINLKVAGQ…VFQQQTGGVY (80 aa)) is the Ubiquitin-like domain. Lys21 is covalently cross-linked (Glycyl lysine isopeptide (Lys-Gly) (interchain with G-Cter in SUMO2)). Residue Gly93 forms a Glycyl lysine isopeptide (Gly-Lys) (interchain with K-? in acceptor proteins) linkage. A propeptide spanning residues 94–95 (VY) is cleaved from the precursor.

It belongs to the ubiquitin family. SUMO subfamily. As to quaternary structure, interacts with SAE2 and UBE2I. Interacts with ZNF451. Identified in a complex with ZNF451 and UBE2I/UBC9, where one ZNF451 interacts with one UBE2I/UBC9 and two SUMO2 chains, one bound to the UBE2I/UBC9 active site and the other to another region of the same UBE2I/UBC9 molecule. Covalently attached to a number of proteins. Interacts with PELP1. Interacts with USP25; the interaction sumoylates USP25. Interacts with SIMC1, CASP8AP2, RNF111 and SOBP (via SIM domains). Interacts with MTA1. Interacts with HINT1. Interacts with GCNA (via SIM domains); this interaction allows the GCNA recruitment to DPCs sites. In terms of processing, polymeric chains can be formed through Lys-11 cross-linking. Polymeric SUMO2 chains undergo 'Lys-6'-, 'Lys-11'-, 'Lys-48'- and 'Lys-63'-linked polyubiquitination by RNF4. Cleavage of precursor form by SENP1 or SENP2 is necessary for function. Post-translationally, monoubiquitinated N-terminally by UBE2W, which primes it for RNF4-dependent polyubiquitination by the UBE2V1-UBE2N heterodimer.

It localises to the nucleus. Its subcellular location is the PML body. In terms of biological role, ubiquitin-like protein that can be covalently attached to proteins as a monomer or as a lysine-linked polymer. Covalent attachment via an isopeptide bond to its substrates requires prior activation by the E1 complex SAE1-SAE2 and linkage to the E2 enzyme UBE2I, and can be promoted by an E3 ligase such as PIAS1-4, RANBP2 or CBX4. This post-translational modification on lysine residues of proteins plays a crucial role in a number of cellular processes such as nuclear transport, DNA replication and repair, mitosis and signal transduction. Polymeric SUMO2 chains are also susceptible to polyubiquitination which functions as a signal for proteasomal degradation of modified proteins. Plays a role in the regulation of sumoylation status of SETX. In Bos taurus (Bovine), this protein is Small ubiquitin-related modifier 2.